Reading from the N-terminus, the 324-residue chain is MAHQIELTQTVKDSQLGQRLDQAVAELFTDFSRSRLKEWLLEGKIAVNGDVITKPRTKVMGGEVITVQAELEDEQRWEAQDLPLNIVYEDDDIIVINKPRDFVVHPGAGQADKTVLNALLFHYSPIAEVPRAGIVHRLDKDTTGLMVVAKTVPAQTRLVRALQKRDVTREYEAIVIGTMTAGGMIDKPIGRHSTKRTLMSVSPMGKHAVTHYRVAEHFREHTRLRLRLETGRTHQIRVHMAYLQHPLLGDTAYGGRARIPKGATEELTEMIRDFDRQALHAVMLKFEHPVTGEELEFHAPVPDDMVEMTLALREDAKLNRTEEY.

In terms of domain architecture, S4 RNA-binding spans 18-91 (QRLDQAVAEL…LPLNIVYEDD (74 aa)). Asp139 is an active-site residue.

Belongs to the pseudouridine synthase RluA family.

Its subcellular location is the cytoplasm. The enzyme catalyses uridine(1911/1915/1917) in 23S rRNA = pseudouridine(1911/1915/1917) in 23S rRNA. Its function is as follows. Responsible for synthesis of pseudouridine from uracil at positions 1911, 1915 and 1917 in 23S ribosomal RNA. This is Ribosomal large subunit pseudouridine synthase D (rluD) from Vibrio cholerae serotype O1 (strain ATCC 39315 / El Tor Inaba N16961).